The primary structure comprises 518 residues: MTSNKKSRLPPYQPGEHVSPSVHLNCVLLTTTVVNFLDLFQLSSVLFALPNIQQALGFASEDINWVLIVYNITFAAFLLIAGQLGQRFGLEKIFIAGTATLTISNVINTTAPNKGALLAGRAISGVGAGLTAPNGLAILSNTFPDPESRNKALAIYTACGPLGSTIGTVVGSHLACMSGWRSIFWLCLILTGLSTILACLFLPRFAKRKDMPIDIPGTVVFTAGVALLVYGLNDSSRRGWTSAAMLTGIILGVCLLFVFLWVEAKVSNPAISSYLWKSGPFLVMLVAIFAFGGSFSTWFFISTQLCVNLLGYSTILTAVYFLPAAFAAIASGVFATPLIRLAGEKNILVAGLAITAAGAVAWAFAGPRIGPAVPTTGRDTAIIFVIGSPVALVPTQSILLREVEAGNHAVAGALFNTAYQVGASVILAGANALMDRSRANVQGVRQVTIDGYLNAFWLIAGVLGAAALTVMVCYWPGKDDLVERQTEEANAVGPLAVDKVDTSKDATASARSVADTRL.

The next 7 membrane-spanning stretches (helical) occupy residues 27–47 (VLLT…SVLF), 65–85 (WVLI…GQLG), 88–108 (FGLE…NVIN), 123–143 (ISGV…SNTF), 152–172 (ALAI…VVGS), 183–203 (IFWL…LFLP), and 212–232 (PIDI…VYGL). N233 is a glycosylation site (N-linked (GlcNAc...) asparagine). Helical transmembrane passes span 242-262 (SAAM…FLWV), 281-301 (FLVM…WFFI), 315-335 (ILTA…GVFA), 347-367 (ILVA…FAGP), 380-400 (TAII…SILL), 409-429 (AVAG…ILAG), and 455-475 (AFWL…VCYW).

Belongs to the major facilitator superfamily. EmrB family.

Its subcellular location is the membrane. Functionally, major facilitator superfamily transporter that may be involved in A.fumigatus adaptation to azoles such as vorizonazole. The chain is Major facilitator superfamily multidrug transporter mfsC from Aspergillus fumigatus (strain ATCC MYA-4609 / CBS 101355 / FGSC A1100 / Af293) (Neosartorya fumigata).